The chain runs to 198 residues: V-type ATP synthase subunit E (198 aa).

It belongs to the V-ATPase E subunit family.

Functionally, produces ATP from ADP in the presence of a proton gradient across the membrane. The chain is V-type ATP synthase subunit E from Clostridium perfringens (strain ATCC 13124 / DSM 756 / JCM 1290 / NCIMB 6125 / NCTC 8237 / Type A).